The following is a 393-amino-acid chain: Na(+)/H(+) antiporter NhaA (393 aa).

12 helical membrane passes run 23–43, 58–78, 96–116, 126–146, 155–175, 178–198, 201–221, 224–244, 265–285, 298–318, 334–354, and 367–387; these read AGGI…NSPF, LSLA…LVGL, MLPG…FAVL, GWAV…SLLG, VFLA…IAIF, AEIS…LFVM, MGVV…FFVF, GVHA…KPAP, VAFI…FKGL, ILLG…WLAI, LYGV…IGLL, and IGVL…LRAA.

The protein belongs to the NhaA Na(+)/H(+) (TC 2.A.33) antiporter family.

It is found in the cell inner membrane. The enzyme catalyses Na(+)(in) + 2 H(+)(out) = Na(+)(out) + 2 H(+)(in). Na(+)/H(+) antiporter that extrudes sodium in exchange for external protons. The chain is Na(+)/H(+) antiporter NhaA from Brucella canis (strain ATCC 23365 / NCTC 10854 / RM-666).